The primary structure comprises 170 residues: Ribosome-binding factor A (170 aa).

Positions 123-170 are disordered; that stretch reads AKAGVYAGDEDPYVKPRVIGEDEDDDDEEGDEDGDDVDRSAPGYEPAH. A compositionally biased stretch (acidic residues) spans 143-158; that stretch reads EDEDDDDEEGDEDGDD.

The protein belongs to the RbfA family. As to quaternary structure, monomer. Binds 30S ribosomal subunits, but not 50S ribosomal subunits or 70S ribosomes.

The protein resides in the cytoplasm. One of several proteins that assist in the late maturation steps of the functional core of the 30S ribosomal subunit. Associates with free 30S ribosomal subunits (but not with 30S subunits that are part of 70S ribosomes or polysomes). Required for efficient processing of 16S rRNA. May interact with the 5'-terminal helix region of 16S rRNA. This Clavibacter sepedonicus (Clavibacter michiganensis subsp. sepedonicus) protein is Ribosome-binding factor A.